Consider the following 510-residue polypeptide: NAD(P)H-quinone oxidoreductase subunit 2 B, chloroplastic (510 aa).

Transmembrane regions (helical) follow at residues 24-44, 57-77, 99-119, 124-144, 149-169, 183-203, 227-247, 295-315, 323-343, 347-367, 395-415, 418-438, and 484-504; these read LLLF…GLIL, IPWL…ALLF, IFQF…VEYI, MAIT…MFLC, LITI…LSGY, YLLM…WLYG, PGIS…LSPA, WHLH…LIAI, MLAY…IVGD, GYAS…GTFA, ALSL…AGFF, LHLF…IGLL, and MIVC…IIAI.

This sequence belongs to the complex I subunit 2 family. NDH is composed of at least 16 different subunits, 5 of which are encoded in the nucleus.

It is found in the plastid. It localises to the chloroplast thylakoid membrane. The enzyme catalyses a plastoquinone + NADH + (n+1) H(+)(in) = a plastoquinol + NAD(+) + n H(+)(out). The catalysed reaction is a plastoquinone + NADPH + (n+1) H(+)(in) = a plastoquinol + NADP(+) + n H(+)(out). Its function is as follows. NDH shuttles electrons from NAD(P)H:plastoquinone, via FMN and iron-sulfur (Fe-S) centers, to quinones in the photosynthetic chain and possibly in a chloroplast respiratory chain. The immediate electron acceptor for the enzyme in this species is believed to be plastoquinone. Couples the redox reaction to proton translocation, and thus conserves the redox energy in a proton gradient. The polypeptide is NAD(P)H-quinone oxidoreductase subunit 2 B, chloroplastic (Buxus microphylla (Littleleaf boxwood)).